The primary structure comprises 32 residues: Putative leucine-rich repeat protein PS14 (32 aa).

The polypeptide is Putative leucine-rich repeat protein PS14 (Pinus strobus (Eastern white pine)).